A 247-amino-acid chain; its full sequence is Neurotrophic factor BDNF precursor form (247 aa).

The signal sequence occupies residues 1-18; the sequence is MTILFLTMVISYFGCMKA. The propeptide occupies 19–128; the sequence is APMKEANVRG…AANMSMRVRR (110 aa). Residue asparagine 121 is glycosylated (N-linked (GlcNAc...) asparagine). 3 disulfides stabilise this stretch: cysteine 141–cysteine 208, cysteine 186–cysteine 237, and cysteine 196–cysteine 239.

The protein belongs to the NGF-beta family. In terms of assembly, monomers and homodimers. Binds to NTRK2/TRKB. Can form heterodimers with other neurotrophin family members, such as NTF3 and NTF4 (in vitro), but the physiological relevance of this is not clear. BDNF precursor form: interacts with the heterodimer formed by NGFR and SORCS2. Mature BDNF has much lower affinity for the heterodimer formed by NGFR and SORCS2. N-glycosylated and glycosulfated, contrary to mature BDNF. In terms of processing, mature BDNF is produced by proteolytic removal of the propeptide, catalyzed by a FURIN family member. In addition, the precursor form is proteolytically cleaved within the propeptide, but this is not an obligatory intermediate for the production of mature BDNF. Can be converted into mature BDNF by plasmin (PLG).

It is found in the secreted. Important signaling molecule that activates signaling cascades downstream of NTRK2. During development, promotes the survival and differentiation of selected neuronal populations of the peripheral and central nervous systems. Participates in axonal growth, pathfinding and in the modulation of dendritic growth and morphology. Major regulator of synaptic transmission and plasticity at adult synapses in many regions of the CNS. The versatility of BDNF is emphasized by its contribution to a range of adaptive neuronal responses including long-term potentiation (LTP), long-term depression (LTD), certain forms of short-term synaptic plasticity, as well as homeostatic regulation of intrinsic neuronal excitability. Functionally, important signaling molecule that activates signaling cascades downstream of NTRK2. Activates signaling cascades via the heterodimeric receptor formed by NGFR and SORCS2. Signaling via NGFR and SORCS2 plays a role in synaptic plasticity and long-term depression (LTD). Binding to NGFR and SORCS2 promotes neuronal apoptosis. Promotes neuronal growth cone collapse. The protein is Neurotrophic factor BDNF precursor form (BDNF) of Helarctos malayanus (Malayan sun bear).